Consider the following 152-residue polypeptide: Large ribosomal subunit protein uL22 (152 aa).

It belongs to the universal ribosomal protein uL22 family. In terms of assembly, part of the 50S ribosomal subunit.

This protein binds specifically to 23S rRNA. It makes multiple contacts with different domains of the 23S rRNA in the assembled 50S subunit and ribosome. In terms of biological role, the globular domain of the protein is located near the polypeptide exit tunnel on the outside of the subunit, while an extended beta-hairpin is found that lines the wall of the exit tunnel in the center of the 70S ribosome. The polypeptide is Large ribosomal subunit protein uL22 (Cenarchaeum symbiosum (strain A)).